The following is a 451-amino-acid chain: AP-4 complex subunit mu (451 aa).

Positions 184–450 constitute an MHD domain; the sequence is REEIFVDIIE…VTQANSYVAR (267 aa).

This sequence belongs to the adaptor complexes medium subunit family. As to quaternary structure, adaptor protein complex 4 (AP-4) is a heterotetramer composed of two large adaptins (epsilon-type subunit and beta-type subunit), a medium adaptin (mu-type subunit) and a small adaptin (sigma-type subunit).

It is found in the golgi apparatus. The protein resides in the trans-Golgi network. It localises to the membrane. Its subcellular location is the coated pit. In terms of biological role, subunit of novel type of clathrin- or non-clathrin-associated protein coat involved in targeting proteins from the trans-Golgi network (TGN) to the endosomal-lysosomal system. The protein is AP-4 complex subunit mu (AP4M) of Arabidopsis thaliana (Mouse-ear cress).